We begin with the raw amino-acid sequence, 394 residues long: ATP phosphoribosyltransferase regulatory subunit (394 aa).

It belongs to the class-II aminoacyl-tRNA synthetase family. HisZ subfamily. Heteromultimer composed of HisG and HisZ subunits.

It is found in the cytoplasm. It functions in the pathway amino-acid biosynthesis; L-histidine biosynthesis; L-histidine from 5-phospho-alpha-D-ribose 1-diphosphate: step 1/9. Its function is as follows. Required for the first step of histidine biosynthesis. May allow the feedback regulation of ATP phosphoribosyltransferase activity by histidine. In Pseudomonas aeruginosa (strain LESB58), this protein is ATP phosphoribosyltransferase regulatory subunit.